We begin with the raw amino-acid sequence, 107 residues long: uncharacterized protein (107 aa).

It localises to the mitochondrion. This is an uncharacterized protein from Arabidopsis thaliana (Mouse-ear cress).